The primary structure comprises 1812 residues: Breast cancer type 1 susceptibility protein homolog (1812 aa).

Methionine 1 bears the N-acetylmethionine mark. The segment at 24–65 adopts an RING-type zinc-finger fold; it reads CPICLELIKEPVSTKCDHIFCKFCMLKLLNQKKGPSQCPLCK. Lysine 109 is covalently cross-linked (Glycyl lysine isopeptide (Lys-Gly) (interchain with G-Cter in SUMO2)). Serine 114 carries the phosphoserine modification. Basic residues predominate over residues 165-176; that stretch reads KKNRQTQPRKKS. Residues 165–198 form a disordered region; sequence KKNRQTQPRKKSVYIELDSDSSEETVTKPGDCSV. Lysine 298 is covalently cross-linked (Glycyl lysine isopeptide (Lys-Gly) (interchain with G-Cter in SUMO2)). The span at 321–332 shows a compositional bias: polar residues; it reads SKGTCNDRQVPS. The interval 321-362 is disordered; the sequence is SKGTCNDRQVPSTGEKVGPNADSLSDREKWTHPQSLCPENSG. Residue lysine 336 forms a Glycyl lysine isopeptide (Lys-Gly) (interchain with G-Cter in SUMO2) linkage. Over residues 352–362 the composition is skewed to polar residues; that stretch reads HPQSLCPENSG. Serine 392 carries the post-translational modification Phosphoserine. Residues lysine 440, lysine 456, and lysine 512 each participate in a glycyl lysine isopeptide (Lys-Gly) (interchain with G-Cter in SUMO2) cross-link. Disordered regions lie at residues 492 to 581 and 640 to 767; these read PFTN…AKSI and SEET…VSDT. Residues 538–556 show a composition bias toward polar residues; that stretch reads QAVSTTSNCQENKIAGSNL. Composition is skewed to basic and acidic residues over residues 557–572 and 669–679; these read QKEK…RKEP and ADAKKNEPNEH. A phosphoserine mark is found at serine 686, serine 706, and serine 717. Composition is skewed to polar residues over residues 702–733 and 758–767; these read TSCS…QMSD and STSVSLVSDT. Serine 831 carries the phosphoserine modification. Disordered stretches follow at residues 864–899, 947–995, 1030–1056, 1147–1185, and 1205–1230; these read KPRS…GQEE, GLSA…STEM, VCST…PPLD, RESS…EDED, and CSSA…SSSD. Polar residues predominate over residues 947–972; the sequence is GLSATGKSGISQNSHFKQSVSPIRSS. Residue serine 971 is modified to Phosphoserine; by CHEK2. Residues 973–991 show a composition bias toward basic and acidic residues; it reads IKTDNRKPLTEGRFERHTS. The residue at position 992 (serine 992) is a Phosphoserine. Lysine 1048 participates in a covalent cross-link: Glycyl lysine isopeptide (Lys-Gly) (interchain with G-Cter in SUMO2). Positions 1151 to 1166 are enriched in polar residues; it reads RSPSPVTHASKSQSLH. Residues serine 1152, serine 1154, serine 1174, and serine 1180 each carry the phosphoserine modification. The span at 1175–1185 shows a compositional bias: acidic residues; it reads SEESDSTEDED. A Phosphoserine modification is found at serine 1241. The disordered stretch occupies residues 1244–1289; sequence HQFSEDPRCSGSMFSSQHSAAQGSTANANSQDSNFIPPSKQRSHQC. Residues 1255-1279 are compositionally biased toward polar residues; the sequence is SMFSSQHSAAQGSTANANSQDSNFI. Residues serine 1297 and serine 1303 each carry the phosphoserine modification. Positions 1313-1323 are enriched in acidic residues; the sequence is EEDNDQEEDSI. Residues 1313 to 1343 are disordered; the sequence is EEDNDQEEDSIIPDSEASGYESETNLSEDCS. Over residues 1333-1343 the composition is skewed to polar residues; that stretch reads ESETNLSEDCS. Serine 1343 is subject to Phosphoserine. Threonine 1350 carries the phosphothreonine modification. The segment at 1353-1380 is interaction with PALB2; it reads RATMKYNLIKLQQEMAHLEAVLEQRGNQ. Phosphoserine occurs at positions 1413, 1481, and 1495. The tract at residues 1437-1547 is disordered; that stretch reads HLEGPTSGDD…AHIGTTPAST (111 aa). Residues 1492–1504 are compositionally biased toward polar residues; it reads EASSEPHNSTGQS. Positions 1527 to 1538 are enriched in basic and acidic residues; that stretch reads RDPESESPKEPA. BRCT domains lie at 1585-1679 and 1698-1797; these read SEER…EFEV and SREK…AYLV.

In terms of assembly, heterodimer with BARD1. Part of the BRCA1-associated genome surveillance complex (BASC), which contains BRCA1, MSH2, MSH6, MLH1, ATM, BLM, PMS2 and the MRE11-RAD50-NBN protein (MRN) complex. This association could be a dynamic process changing throughout the cell cycle and within subnuclear domains. Component of the BRCA1-A complex, at least composed of BRCA1, BARD1, UIMC1/RAP80, ABRAXAS1, BRCC3/BRCC36, BABAM2 and BABAM1/NBA1. Interacts (via the BRCT domains) with ABRAXAS1 (phosphorylated form); this is important for recruitment to sites of DNA damage. Can form a heterotetramer with two molecules of ABRAXAS1 (phosphorylated form). Component of the BRCA1-RBBP8 complex. Interacts (via the BRCT domains) with RBBP8 ('Ser-327' phosphorylated form); the interaction ubiquitinates RBBP8, regulates CHEK1 activation, and involves RBBP8 in BRCA1-dependent G2/M checkpoint control on DNA damage. Associates with RNA polymerase II holoenzyme. Interacts with SMC1A, NELFB, DCLRE1C, CLSPN. CHEK1, CHEK2, BAP1, BRCC3, UBXN1 and PCLAF. Interacts (via BRCT domains) with BRIP1 (phosphorylated form). Interacts with FANCD2 (ubiquitinated form). Interacts with H2AX (phosphorylated on 'Ser-140'). Interacts (via the BRCT domains) with ACACA (phosphorylated form); the interaction prevents dephosphorylation of ACACA. Part of a BRCA complex containing BRCA1, BRCA2 and PALB2. Interacts directly with PALB2; the interaction is essential for its function in HRR. Interacts directly with BRCA2; the interaction occurs only in the presence of PALB2 which serves as the bridging protein. Interacts (via the BRCT domains) with LMO4; the interaction represses the transcriptional activity of BRCA1. Interacts (via the BRCT domains) with CCAR2 (via N-terminus); the interaction represses the transcriptional activator activity of BRCA1. Interacts with EXD2. Interacts (via C-terminus) with DHX9; this interaction is direct and links BRCA1 to the RNA polymerase II holoenzyme. Interacts with DNA helicase ZGRF1; the interaction is increased following DNA damage induction. In terms of processing, phosphorylated in response to IR, UV, and various stimuli that cause checkpoint activation, probably by ATM or ATR. Phosphorylation at Ser-971 by CHEK2 regulates mitotic spindle assembly. Phosphorylation by AURKA regulates centrosomal microtubule nucleation. Autoubiquitinated, undergoes 'Lys-6'-linked polyubiquitination. 'Lys-6'-linked polyubiquitination does not promote degradation. As to expression, in the embryo, expressed in otic vesicles at day 9.5. At day 10.5, this expression decreases and high levels are found in the neuroectoderm. At days 11-12.5, high levels in differentiating keratinocytes and whisker pad primordia. At days 14-17, expression also observed in kidney epithelial cells. In the adult, highest levels found in spleen, thymus, lymph nodes, epithelial organs, and alveolar and ductal epithelial cells of the mammary gland. Very low levels in brain, kidney, and skin. No expression in heart, liver or lung.

The protein resides in the nucleus. The protein localises to the chromosome. It is found in the cytoplasm. It catalyses the reaction S-ubiquitinyl-[E2 ubiquitin-conjugating enzyme]-L-cysteine + [acceptor protein]-L-lysine = [E2 ubiquitin-conjugating enzyme]-L-cysteine + N(6)-ubiquitinyl-[acceptor protein]-L-lysine.. Its pathway is protein modification; protein ubiquitination. Functionally, E3 ubiquitin-protein ligase that specifically mediates the formation of 'Lys-6'-linked polyubiquitin chains and plays a central role in DNA repair by facilitating cellular responses to DNA damage. It is unclear whether it also mediates the formation of other types of polyubiquitin chains. The BRCA1-BARD1 heterodimer coordinates a diverse range of cellular pathways such as DNA damage repair, ubiquitination and transcriptional regulation to maintain genomic stability. Regulates centrosomal microtubule nucleation. Required for appropriate cell cycle arrests after ionizing irradiation in both the S-phase and the G2 phase of the cell cycle. Required for FANCD2 targeting to sites of DNA damage. Inhibits lipid synthesis by binding to inactive phosphorylated ACACA and preventing its dephosphorylation. Contributes to homologous recombination repair (HRR) via its direct interaction with PALB2, fine-tunes recombinational repair partly through its modulatory role in the PALB2-dependent loading of BRCA2-RAD51 repair machinery at DNA breaks. Component of the BRCA1-RBBP8 complex which regulates CHEK1 activation and controls cell cycle G2/M checkpoints on DNA damage via BRCA1-mediated ubiquitination of RBBP8. Acts as a transcriptional activator. This chain is Breast cancer type 1 susceptibility protein homolog (Brca1), found in Mus musculus (Mouse).